Here is a 196-residue protein sequence, read N- to C-terminus: Pyridoxal 5'-phosphate synthase subunit PdxT (196 aa).

52–54 provides a ligand contact to L-glutamine; sequence GES. Residue Cys84 is the Nucleophile of the active site. L-glutamine is bound by residues Arg113 and 141 to 142; that span reads IR. Active-site charge relay system residues include His178 and Glu180.

It belongs to the glutaminase PdxT/SNO family. In terms of assembly, in the presence of PdxS, forms a dodecamer of heterodimers. Only shows activity in the heterodimer.

The catalysed reaction is aldehydo-D-ribose 5-phosphate + D-glyceraldehyde 3-phosphate + L-glutamine = pyridoxal 5'-phosphate + L-glutamate + phosphate + 3 H2O + H(+). It carries out the reaction L-glutamine + H2O = L-glutamate + NH4(+). It participates in cofactor biosynthesis; pyridoxal 5'-phosphate biosynthesis. Functionally, catalyzes the hydrolysis of glutamine to glutamate and ammonia as part of the biosynthesis of pyridoxal 5'-phosphate. The resulting ammonia molecule is channeled to the active site of PdxS. In Pyrococcus horikoshii (strain ATCC 700860 / DSM 12428 / JCM 9974 / NBRC 100139 / OT-3), this protein is Pyridoxal 5'-phosphate synthase subunit PdxT.